The chain runs to 241 residues: Pyridoxine/pyridoxamine 5'-phosphate oxidase (241 aa).

The segment at 1–35 (MASNPPSAASPRRTAVSPGADRPDGPDPAGQRQSY) is disordered. Substrate is bound by residues 32-35 (RQSY) and Lys92. FMN contacts are provided by residues 87–92 (RTVLLK), 102–103 (YT), Arg108, Lys109, and Gln131. Tyr149, Arg153, and Ser157 together coordinate substrate. Residues 166-167 (QS) and Trp212 each bind FMN. 218–220 (RLH) provides a ligand contact to substrate. Residue Arg222 participates in FMN binding.

It belongs to the pyridoxamine 5'-phosphate oxidase family. Homodimer. Requires FMN as cofactor.

It catalyses the reaction pyridoxamine 5'-phosphate + O2 + H2O = pyridoxal 5'-phosphate + H2O2 + NH4(+). The enzyme catalyses pyridoxine 5'-phosphate + O2 = pyridoxal 5'-phosphate + H2O2. Its pathway is cofactor metabolism; pyridoxal 5'-phosphate salvage; pyridoxal 5'-phosphate from pyridoxamine 5'-phosphate: step 1/1. It participates in cofactor metabolism; pyridoxal 5'-phosphate salvage; pyridoxal 5'-phosphate from pyridoxine 5'-phosphate: step 1/1. Functionally, catalyzes the oxidation of either pyridoxine 5'-phosphate (PNP) or pyridoxamine 5'-phosphate (PMP) into pyridoxal 5'-phosphate (PLP). This Frankia alni (strain DSM 45986 / CECT 9034 / ACN14a) protein is Pyridoxine/pyridoxamine 5'-phosphate oxidase.